Consider the following 477-residue polypeptide: Mitochondrial adenyl nucleotide antiporter SLC25A24 (477 aa).

Residues 1 to 174 (MHQLIRKFVF…RYWKKSTVLD (174 aa)) form a regulatory N-terminal domain region. The Mitochondrial intermembrane portion of the chain corresponds to 1-198 (MHQLIRKFVF…EKTTGMWWKQ (198 aa)). One can recognise an EF-hand 1 domain in the interval 20–55 (DNTKSFAELFEKLDVNKDGKVDVSELKTGLAAMGFS). Aspartate 33, asparagine 35, aspartate 37, lysine 39, glutamate 44, aspartate 69, aspartate 71, aspartate 73, glutamate 80, aspartate 100, asparagine 102, aspartate 104, arginine 106, glutamate 111, aspartate 136, aspartate 138, threonine 140, threonine 142, and glutamate 147 together coordinate Ca(2+). 2 EF-hand domains span residues 87 to 122 (EHEK…LGIN) and 123 to 158 (LSDK…NPAE). Residues 160–169 (LQQIIRYWKK) are linker region. Positions 175-477 (IGDSLTIPDE…YMRSGLGISK (303 aa)) are C-terminal transmembrane transporter domain. 3 Solcar repeats span residues 193 to 279 (GMWW…YKKL), 287 to 372 (VQSH…LKNT), and 384 to 472 (PGVL…MRSG). Residues 199–216 (LAAGGVAGAVSRTGTAPL) form a helical membrane-spanning segment. Over 217-253 (DRMKVFMQVHSSKTNKISLVNGFKQMIKEGGVASLWR) the chain is Mitochondrial matrix. A helical membrane pass occupies residues 254–273 (GNGVNVIKIAPETAIKFMAY). Residues 274–296 (EQYKKLLSKDGGKVQSHERFMAG) are Mitochondrial intermembrane-facing. The chain crosses the membrane as a helical span at residues 297–310 (SLAGATAQTAIYPM). Over 311 to 346 (EVMKTRLTLRKTGQYSGMFDCAKKILRKEGVKAFYK) the chain is Mitochondrial matrix. A helical transmembrane segment spans residues 347 to 366 (GYVPNILGIIPYAGIDLAVY). Topologically, residues 367–389 (ETLKNTWLSHYAKDTANPGVLVL) are mitochondrial intermembrane. A helical transmembrane segment spans residues 390-407 (LGCGTISSTCGQLASYPL). Residues 408–446 (ALIRTRMQAMASMEGSEQVSMSKLVKKIMQKEGFFGLYR) lie on the Mitochondrial matrix side of the membrane. A helical membrane pass occupies residues 447–466 (GILPNFMKVIPAVSISYVVY). Over 467–477 (EYMRSGLGISK) the chain is Mitochondrial intermembrane.

The protein belongs to the mitochondrial carrier (TC 2.A.29) family. Monomer.

It is found in the mitochondrion inner membrane. The enzyme catalyses Mg(2+)(out) + phosphate(in) + ATP(out) = Mg(2+)(in) + phosphate(out) + ATP(in). It catalyses the reaction ADP(out) + phosphate(in) + H(+)(out) = ADP(in) + phosphate(out) + H(+)(in). The catalysed reaction is AMP(out) + phosphate(in) = AMP(in) + phosphate(out). It carries out the reaction phosphate(in) + ATP(out) + 2 H(+)(out) = phosphate(out) + ATP(in) + 2 H(+)(in). The enzyme catalyses dADP(in) + ADP(out) = dADP(out) + ADP(in). It catalyses the reaction Mg(2+)(in) + ADP(out) + ATP(in) + H(+)(out) = Mg(2+)(out) + ADP(in) + ATP(out) + H(+)(in). The catalysed reaction is ADP(out) + diphosphate(in) = ADP(in) + diphosphate(out). It carries out the reaction dAMP(in) + ADP(out) + H(+)(out) = dAMP(out) + ADP(in) + H(+)(in). The enzyme catalyses 3'-AMP(in) + ADP(out) + H(+)(out) = 3'-AMP(out) + ADP(in) + H(+)(in). It catalyses the reaction dAMP(out) + phosphate(in) = dAMP(in) + phosphate(out). The catalysed reaction is 3'-AMP(out) + phosphate(in) = 3'-AMP(in) + phosphate(out). It carries out the reaction dADP(out) + phosphate(in) + H(+)(out) = dADP(in) + phosphate(out) + H(+)(in). Activated by an increase in cytosolic calcium levels that induce a conformational change of the N-terminal regulatory domain, uncapping the channel and allowing transport. Inhibited by bathophenanthroline, mersalyl, p-hydroxymercuribenzoate, bromcresol purple and tannic acid. Electroneutral antiporter that mediates the transport of adenyl nucleotides through the inner mitochondrial membrane. Originally identified as an ATP-magnesium/inorganic phosphate antiporter, it also acts as a broad specificity adenyl nucleotide antiporter. By regulating the mitochondrial matrix adenyl nucleotide pool could adapt to changing cellular energetic demands and indirectly regulate adenyl nucleotide-dependent metabolic pathways. The protein is Mitochondrial adenyl nucleotide antiporter SLC25A24 (slc25a24) of Danio rerio (Zebrafish).